The sequence spans 900 residues: Protein translocase subunit SecA (900 aa).

ATP contacts are provided by residues Gln87, Gly105–Thr109, and Asp512. The span at Gln842–Ala852 shows a compositional bias: basic and acidic residues. Residues Gln842 to Lys900 form a disordered region. Residues Cys883, Cys885, Cys894, and His895 each coordinate Zn(2+). A compositionally biased stretch (basic residues) spans Lys889–Lys900.

This sequence belongs to the SecA family. As to quaternary structure, monomer and homodimer. Part of the essential Sec protein translocation apparatus which comprises SecA, SecYEG and auxiliary proteins SecDF-YajC and YidC. Requires Zn(2+) as cofactor.

The protein localises to the cell inner membrane. It is found in the cytoplasm. It catalyses the reaction ATP + H2O + cellular proteinSide 1 = ADP + phosphate + cellular proteinSide 2.. Part of the Sec protein translocase complex. Interacts with the SecYEG preprotein conducting channel. Has a central role in coupling the hydrolysis of ATP to the transfer of proteins into and across the cell membrane, serving both as a receptor for the preprotein-SecB complex and as an ATP-driven molecular motor driving the stepwise translocation of polypeptide chains across the membrane. In Pectobacterium carotovorum subsp. carotovorum (strain PC1), this protein is Protein translocase subunit SecA.